A 270-amino-acid chain; its full sequence is Monofunctional glycosyltransferase (270 aa).

Positions 1–10 are enriched in polar residues; sequence MKRSQRMNNS. The disordered stretch occupies residues 1-36; that stretch reads MKRSQRMNNSPERHSQYRNEPHYNTYYQPVGKPPKK. The span at 11–21 shows a compositional bias: basic and acidic residues; sequence PERHSQYRNEP. Residues 42–62 form a helical membrane-spanning segment; sequence IFLRLFIIFVFIYALFIGLMY.

Belongs to the glycosyltransferase 51 family.

It localises to the cell membrane. The enzyme catalyses [GlcNAc-(1-&gt;4)-Mur2Ac(oyl-L-Ala-gamma-D-Glu-L-Lys-D-Ala-D-Ala)](n)-di-trans,octa-cis-undecaprenyl diphosphate + beta-D-GlcNAc-(1-&gt;4)-Mur2Ac(oyl-L-Ala-gamma-D-Glu-L-Lys-D-Ala-D-Ala)-di-trans,octa-cis-undecaprenyl diphosphate = [GlcNAc-(1-&gt;4)-Mur2Ac(oyl-L-Ala-gamma-D-Glu-L-Lys-D-Ala-D-Ala)](n+1)-di-trans,octa-cis-undecaprenyl diphosphate + di-trans,octa-cis-undecaprenyl diphosphate + H(+). It functions in the pathway cell wall biogenesis; peptidoglycan biosynthesis. Functionally, peptidoglycan polymerase that catalyzes glycan chain elongation using lipid-linked disaccharide-pentapeptide as the substrate. This Staphylococcus haemolyticus (strain JCSC1435) protein is Monofunctional glycosyltransferase.